The primary structure comprises 363 residues: Probable matrix metalloproteinase 095L (363 aa).

The N-terminal stretch at 1–25 (MSVDSFTSRLAVVMTAVVLVWWAQA) is a signal peptide. The propeptide at 26 to 126 (LPVPSPRRGE…PRCGVPDVSK (101 aa)) is activation peptide. A Cysteine switch motif is present at residues 117 to 124 (PRCGVPDV). Residues C119 and H275 each coordinate Zn(2+). Residue E276 is part of the active site. Residues H279 and H285 each coordinate Zn(2+).

Belongs to the peptidase M10A family. Requires Zn(2+) as cofactor.

It is found in the secreted. In terms of biological role, probable endopeptidase. This Aedes vexans (Inland floodwater mosquito) protein is Probable matrix metalloproteinase 095L.